Here is a 95-residue protein sequence, read N- to C-terminus: Small ribosomal subunit protein bS6 (95 aa).

This sequence belongs to the bacterial ribosomal protein bS6 family.

In terms of biological role, binds together with bS18 to 16S ribosomal RNA. The chain is Small ribosomal subunit protein bS6 from Bacillus velezensis (strain DSM 23117 / BGSC 10A6 / LMG 26770 / FZB42) (Bacillus amyloliquefaciens subsp. plantarum).